The following is a 341-amino-acid chain: MANVAVIGAGSWGTAISLVLADNGHDVLLYGREQEHVDEINSSHTNSFYLKDAPLPESIRATTNLKEALDGRSIVFLVVPSSAIRPVSKELNTLLTEPVTIVHAAKGIEPKTHERLSEIIAEEIEPAKRRAIGVLTGPTHAEEVAVRKPTTITIACADLDVADEVQELLTNDQFRVYLNSDVVGAEYGGALKNIIALAAGMTDGLGYGDNAKAALMTRGIVEIARLGVKLGANPASFSGLTGIGDLIVTATSQHSRNWRAGNAIGRGEKLEDVLGNMGMVVEGVRACEAAHSLAKEAGVEMPITEALYNVLFEGKSPHDEVKKLMRRPQKHEMEQVFHFEE.

Ser-11, Trp-12, Arg-32, and Lys-106 together coordinate NADPH. The sn-glycerol 3-phosphate site is built by Lys-106, Gly-137, and Thr-139. Residue Ala-141 participates in NADPH binding. 5 residues coordinate sn-glycerol 3-phosphate: Lys-192, Asp-245, Ser-255, Arg-256, and Asn-257. Catalysis depends on Lys-192, which acts as the Proton acceptor. Arg-256 lines the NADPH pocket. NADPH is bound by residues Val-280 and Glu-282.

This sequence belongs to the NAD-dependent glycerol-3-phosphate dehydrogenase family.

The protein localises to the cytoplasm. It catalyses the reaction sn-glycerol 3-phosphate + NAD(+) = dihydroxyacetone phosphate + NADH + H(+). It carries out the reaction sn-glycerol 3-phosphate + NADP(+) = dihydroxyacetone phosphate + NADPH + H(+). The protein operates within membrane lipid metabolism; glycerophospholipid metabolism. In terms of biological role, catalyzes the reduction of the glycolytic intermediate dihydroxyacetone phosphate (DHAP) to sn-glycerol 3-phosphate (G3P), the key precursor for phospholipid synthesis. The protein is Glycerol-3-phosphate dehydrogenase [NAD(P)+] of Exiguobacterium sp. (strain ATCC BAA-1283 / AT1b).